We begin with the raw amino-acid sequence, 348 residues long: Dihydroorotase (348 aa).

Residues His-17 and His-19 each contribute to the Zn(2+) site. Substrate contacts are provided by residues 19–21 and Asn-45; that span reads HLR. 3 residues coordinate Zn(2+): Lys-103, His-140, and His-178. An N6-carboxylysine modification is found at Lys-103. His-140 provides a ligand contact to substrate. Substrate is bound at residue Leu-223. Asp-251 provides a ligand contact to Zn(2+). The active site involves Asp-251. Substrate is bound by residues His-255 and Ala-267.

The protein belongs to the metallo-dependent hydrolases superfamily. DHOase family. Class II DHOase subfamily. Homodimer. Zn(2+) is required as a cofactor.

The catalysed reaction is (S)-dihydroorotate + H2O = N-carbamoyl-L-aspartate + H(+). It participates in pyrimidine metabolism; UMP biosynthesis via de novo pathway; (S)-dihydroorotate from bicarbonate: step 3/3. Functionally, catalyzes the reversible cyclization of carbamoyl aspartate to dihydroorotate. This Escherichia coli O6:H1 (strain CFT073 / ATCC 700928 / UPEC) protein is Dihydroorotase.